The chain runs to 213 residues: Probable chemoreceptor glutamine deamidase CheD (213 aa).

Residues 1–12 (MNRHRPHSHRSK) show a composition bias toward basic residues. A disordered region spans residues 1-25 (MNRHRPHSHRSKPASTQDQPDSVRR).

Belongs to the CheD family.

It catalyses the reaction L-glutaminyl-[protein] + H2O = L-glutamyl-[protein] + NH4(+). In terms of biological role, probably deamidates glutamine residues to glutamate on methyl-accepting chemotaxis receptors (MCPs), playing an important role in chemotaxis. This chain is Probable chemoreceptor glutamine deamidase CheD, found in Rhodopseudomonas palustris (strain BisA53).